The following is a 539-amino-acid chain: MLLPLTKLKPRAKVAVVGGGVSGLCFTYFLSKLRPDVEITLFESQNRTGGWIYSCNTRDMSGNPIMLEKGPRTLRGVSDGTVLIMDTLKDLGKEAVIQSIDKGCIADKKFLLDPSDKLVQVPNSISTTVKFLLNPLGKGLITGMMGEWFRKKSPHPGQDESVESICDRRFGNNYISNNMISALLRGIYGDDVSLLSAKRTFKKIYYNELKHGSNTQAMIDNMRGKSRSKKTENLHQSLTGCLNDYSNAFGKDRSKLLDLSNTLKKYPMLGLAGGLETFPKIVRNALNEFKNVKIVTGNPVTQIMKRPANETTIGLKAKSGDQYETFDHLRLTITPPKIAKLLPKDQNSLSKLLDEIQSNTIILVNYYLPNKDVIDADLQGFGYLVPKSNKNPGKLLGVIFDSVIERNFKPLFDKLSTNPNALNKYTKVTAMIGGCMLNEHGVPVVPSREVTINAVKDALNNHLGISNKDLEAGQWEFTIADRCLPRFHVGYDAWQERAERKLQESYGQTVSVGGMGFSRSPGVPDVIVDGFNDALQLSK.

Residues 18 to 23, 43 to 44, W51, 70 to 73, V300, and 521 to 523 each bind FAD; these read GGGVSG, ES, GPRT, and PGV.

Belongs to the protoporphyrinogen/coproporphyrinogen oxidase family. Protoporphyrinogen oxidase subfamily. FAD serves as cofactor.

The protein resides in the mitochondrion inner membrane. The catalysed reaction is protoporphyrinogen IX + 3 O2 = protoporphyrin IX + 3 H2O2. The protein operates within porphyrin-containing compound metabolism; protoporphyrin-IX biosynthesis; protoporphyrin-IX from protoporphyrinogen-IX: step 1/1. Catalyzes the 6-electron oxidation of protoporphyrinogen-IX to form protoporphyrin-IX. The polypeptide is Protoporphyrinogen oxidase (Saccharomyces cerevisiae (strain ATCC 204508 / S288c) (Baker's yeast)).